We begin with the raw amino-acid sequence, 384 residues long: N-acetylneuraminate epimerase (384 aa).

The first 29 residues, 1–29 (MGMQMKNFKKMMTLMALCLSVAITTSGYA), serve as a signal peptide directing secretion. Kelch repeat units lie at residues 51-95 (VIYV…VFLN), 97-149 (ELYV…VKLN), 151-184 (TMVL…KVIY), 185-230 (NYFN…VMEN), 233-282 (LMLI…LAGA), 304-353 (QNYT…SYGD), and 355-384 (VFLI…LLIK). E239 (proton acceptor) is an active-site residue.

It belongs to the NanM family. In terms of assembly, homodimer.

The protein localises to the periplasm. It carries out the reaction N-acetyl-alpha-neuraminate = N-acetyl-beta-neuraminate. Its function is as follows. Converts alpha-N-acetylneuranimic acid (Neu5Ac) to the beta-anomer, accelerating the equilibrium between the alpha- and beta-anomers. Probably facilitates sialidase-negative bacteria to compete successfully for limited amounts of extracellular Neu5Ac, which is likely taken up in the beta-anomer. In addition, the rapid removal of sialic acid from solution might be advantageous to the bacterium to damp down host responses. In Salmonella enteritidis PT4 (strain P125109), this protein is N-acetylneuraminate epimerase.